Reading from the N-terminus, the 237-residue chain is Ribosomal RNA small subunit methyltransferase G (237 aa).

S-adenosyl-L-methionine contacts are provided by residues G76, F81, 99-101 (DSS), 128-129 (IE), and R147.

The protein belongs to the methyltransferase superfamily. RNA methyltransferase RsmG family.

Its subcellular location is the cytoplasm. Its function is as follows. Specifically methylates the N7 position of a guanine in 16S rRNA. The polypeptide is Ribosomal RNA small subunit methyltransferase G (Prochlorococcus marinus (strain MIT 9312)).